Reading from the N-terminus, the 25-residue chain is MRAKWRKKRMRRLKRKRRKMRARSK.

A disordered region spans residues 1–25; that stretch reads MRAKWRKKRMRRLKRKRRKMRARSK.

It belongs to the eukaryotic ribosomal protein eS32 family. Component of the small ribosomal subunit.

The protein is Small ribosomal subunit protein eS32 (RpL41) of Spodoptera frugiperda (Fall armyworm).